We begin with the raw amino-acid sequence, 105 residues long: Spermatogenesis-associated protein 8 (105 aa).

Expressed at high levels in adult testis, at moderate levels in sperm and at low levels in fetal testis. Not detected in other tissues.

The chain is Spermatogenesis-associated protein 8 (SPATA8) from Homo sapiens (Human).